The following is a 272-amino-acid chain: Rhamnulose-1-phosphate aldolase (272 aa).

Glu-117 is a catalytic residue. Residues His-141, His-143, and His-212 each coordinate Zn(2+).

This sequence belongs to the aldolase class II family. RhaD subfamily. It depends on Zn(2+) as a cofactor.

Its subcellular location is the cytoplasm. The enzyme catalyses L-rhamnulose 1-phosphate = (S)-lactaldehyde + dihydroxyacetone phosphate. The protein operates within carbohydrate degradation; L-rhamnose degradation; glycerone phosphate from L-rhamnose: step 3/3. Functionally, catalyzes the reversible cleavage of L-rhamnulose-1-phosphate to dihydroxyacetone phosphate (DHAP) and L-lactaldehyde. This chain is Rhamnulose-1-phosphate aldolase, found in Mannheimia succiniciproducens (strain KCTC 0769BP / MBEL55E).